The sequence spans 257 residues: Homeobox protein goosecoid (257 aa).

The segment at residues 160–219 (KRRHRTIFTDEQLEALENLFQETKYPDVGTREQLARKVHLREEKVEVWFKNRRAKWRRQK) is a DNA-binding region (homeobox). The interval 213-257 (AKWRRQKRSSSEESENAEKWNKTSSSKASPEKREEEGKSDLDSDS) is disordered. The span at 241–257 (SPEKREEEGKSDLDSDS) shows a compositional bias: basic and acidic residues.

The protein belongs to the paired homeobox family. Bicoid subfamily.

It localises to the nucleus. Its function is as follows. Regulates chordin (CHRD). May play a role in spatial programing within discrete embryonic fields or lineage compartments during organogenesis. In concert with NKX3-2, plays a role in defining the structural components of the middle ear; required for the development of the entire tympanic ring. Probably involved in the regulatory networks that define neural crest cell fate specification and determine mesoderm cell lineages in mammals. The sequence is that of Homeobox protein goosecoid (GSC) from Saguinus labiatus (Red-chested mustached tamarin).